Here is an 831-residue protein sequence, read N- to C-terminus: Cadherin-related family member 5 (831 aa).

The N-terminal stretch at 1-28 (MGAPALLWPSLLLPWLTVLFGQPPGTLA) is a signal peptide. Over 29–641 (QTQVCSVNQT…GQRFSTVDMA (613 aa)) the chain is Extracellular. N-linked (GlcNAc...) asparagine glycosylation is found at Asn36, Asn45, Asn84, Asn135, Asn143, Asn173, Asn201, Asn287, Asn311, Asn408, and Asn475. Cadherin domains follow at residues 53-125 (VNIF…DNAP), 128-240 (SFEI…TPWF), 252-357 (IHAQ…PLQF), and 358-459 (SQSL…ERER). Positions 452 to 632 (IQVSERERTP…STGAGEQGDG (181 aa)) are disordered. Over residues 473–491 (SSNTTMEAPLTSGTSQRPA) the composition is skewed to polar residues. Positions 505–540 (GGTTLRPPTPASSIPGGSPTLGTSTSPQTTTPGGDS) are enriched in low complexity. Residues 541–554 (AQTPKPGTSHPTAP) show a composition bias toward polar residues. 2 repeat units span residues 541–571 (AQTPKPGTSHPTAPTSRTSTSLMTTSSRSDS) and 572–602 (TQTPKPGTSQPMVPIPGASTSSQPATPSGSS). Residues 541–614 (AQTPKPGTSH…TPKPGTSQST (74 aa)) are 3 X 31 AA approximate tandem repeats. Low complexity predominate over residues 555–572 (TSRTSTSLMTTSSRSDST). 2 stretches are compositionally biased toward polar residues: residues 573–582 (QTPKPGTSQP) and 589–623 (ASTSSQPATPSGSSPQTPKPGTSQSTATGPISLPS). One copy of the 3; truncated repeat lies at 605–614 (TPKPGTSQST). A helical membrane pass occupies residues 642 to 662 (VLGGVLGALLLLALICLVILV). The Cytoplasmic portion of the chain corresponds to 663–831 (HKHYRHRLAC…FGVDADNTYI (169 aa)). Positions 663 to 831 (HKHYRHRLAC…FGVDADNTYI (169 aa)) are mediates interaction with USH1C and MYO7B and is required for proper localization to microvilli tips and function in microvilli organization. Disordered stretches follow at residues 675–774 (GKAS…GGYK) and 793–831 (EPTADVDSASASGSEGSDDDDPDQKKTLRFGVDADNTYI). Residues Ser699, Ser721, and Ser725 each carry the phosphoserine modification. A compositionally biased stretch (pro residues) spans 716-738 (PLRPPSPMSSSPTPPSSTPPSPQ). Residue Thr728 is modified to Phosphothreonine. A phosphoserine mark is found at Ser736 and Ser753. Positions 761-771 (LTKERRPEGEG) are enriched in basic and acidic residues. A Phosphothreonine modification is found at Thr795. Residues 797 to 807 (DVDSASASGSE) show a composition bias toward low complexity. Ser802, Ser804, and Ser806 each carry phosphoserine.

In terms of assembly, part of the IMAC/intermicrovillar adhesion complex/intermicrovillar tip-link complex composed of ANKS4B, MYO7B, USH1C, CDHR2 and CDHR5. Interacts (via cytoplasmic domain) with USH1C and MYO7B; required for proper localization of CDHR5 to microvilli tips and its function in brush border differentiation. In terms of processing, N- and O-glycosylated.

The protein resides in the apical cell membrane. It is found in the cell projection. The protein localises to the microvillus membrane. Its function is as follows. Intermicrovillar adhesion molecule that forms, via its extracellular domain, calcium-dependent heterophilic complexes with CDHR2 on adjacent microvilli. Thereby, controls the packing of microvilli at the apical membrane of epithelial cells. Through its cytoplasmic domain, interacts with microvillus cytoplasmic proteins to form the intermicrovillar adhesion complex/IMAC. This complex plays a central role in microvilli and epithelial brush border differentiation. This Mus musculus (Mouse) protein is Cadherin-related family member 5.